The primary structure comprises 29 residues: Kalata-B11 (29 aa).

Positions 1-29 (GLPVCGETCFGGTCNTPGCSCTDPICTRD) form a cross-link, cyclopeptide (Gly-Asp). Cystine bridges form between C5-C19, C9-C21, and C14-C26.

Post-translationally, this is a cyclic peptide.

Functionally, probably participates in a plant defense mechanism. The chain is Kalata-B11 from Oldenlandia affinis.